The following is a 613-amino-acid chain: Chaperone protein DnaK (613 aa).

A Phosphothreonine; by autocatalysis modification is found at Thr173. The disordered stretch occupies residues 577–613; that stretch reads AKQAQAQQEGGAEGAQKADDNVVDAEYEEVNDDQEKK. The segment covering 597–613 has biased composition (acidic residues); it reads NVVDAEYEEVNDDQEKK.

Belongs to the heat shock protein 70 family.

Acts as a chaperone. The protein is Chaperone protein DnaK of Bacillus pumilus (strain SAFR-032).